A 33-amino-acid chain; its full sequence is Photosystem II reaction center protein Psb30 (33 aa).

Residues 5–25 (IVFQLTSLVLILAAGPLVVVL) form a helical membrane-spanning segment.

It belongs to the Psb30/Ycf12 family. In terms of assembly, PSII is composed of 1 copy each of membrane proteins PsbA, PsbB, PsbC, PsbD, PsbE, PsbF, PsbH, PsbI, PsbJ, PsbK, PsbL, PsbM, PsbT, PsbX, PsbY, PsbZ, Psb30/Ycf12, peripheral proteins of the oxygen-evolving complex and a large number of cofactors. It forms dimeric complexes.

It localises to the plastid. The protein resides in the chloroplast thylakoid membrane. Functionally, a core subunit of photosystem II (PSII), probably helps stabilize the reaction center. The sequence is that of Photosystem II reaction center protein Psb30 from Tetradesmus obliquus (Green alga).